The sequence spans 337 residues: Mating-type protein MAT-2 (337 aa).

A DNA-binding region (HMG box) is located at residues 125–193 (APRPMNCWII…EHLRQHPNYK (69 aa)). Residues 171 to 219 (KRPWQDAAQSAKEEHLRQHPNYKYTPRKPGEKKKRQSRKSKRAAATTTA) form a disordered region. Positions 200-212 (GEKKKRQSRKSKR) are enriched in basic residues.

Its subcellular location is the nucleus. This is Mating-type protein MAT-2 (MAT2) from Cochliobolus sativus (Common root rot and spot blotch fungus).